The following is a 364-amino-acid chain: MKTNLLNYDLQGLTRHFADMGEKPFRAKQVMRWMHQSGAQNFNEMTDLAKSLRHKLNEQAGIEIPKLMMSQKSSDGTRKWLLDVGTGNGVETVFIPESDRGTLCISSQVGCALECTFCSTGRQGFNRNLTAAEIIGQLWWANKAMGVTPKNERVISNVVMMGMGEPMANFDNVVTALSIMLDDHGYGLSRRRVTVSTSGMVPQMDRLRDVMPVALAVSLHASNDEVRNQIVPLNKKYPLKELMAACQRYLVKAPRDFITFEYVMLDGINDKAQHARELIELVTDVPCKFNLIPFNPFPNSGYERSSNENIRVFRDILQQAGFVVTVRKTRGDDIDAACGQLAGQVQDKTRRQQKWQQILIGQQG.

The Proton acceptor role is filled by E91. The 237-residue stretch at 97 to 333 folds into the Radical SAM core domain; it reads ESDRGTLCIS…VTVRKTRGDD (237 aa). C104 and C338 are joined by a disulfide. The [4Fe-4S] cluster site is built by C111, C115, and C118. Residues 164–165, S196, 218–220, and N295 contribute to the S-adenosyl-L-methionine site; these read GE and SLH. Catalysis depends on C338, which acts as the S-methylcysteine intermediate.

This sequence belongs to the radical SAM superfamily. RlmN family. [4Fe-4S] cluster is required as a cofactor.

It localises to the cytoplasm. It catalyses the reaction adenosine(2503) in 23S rRNA + 2 reduced [2Fe-2S]-[ferredoxin] + 2 S-adenosyl-L-methionine = 2-methyladenosine(2503) in 23S rRNA + 5'-deoxyadenosine + L-methionine + 2 oxidized [2Fe-2S]-[ferredoxin] + S-adenosyl-L-homocysteine. It carries out the reaction adenosine(37) in tRNA + 2 reduced [2Fe-2S]-[ferredoxin] + 2 S-adenosyl-L-methionine = 2-methyladenosine(37) in tRNA + 5'-deoxyadenosine + L-methionine + 2 oxidized [2Fe-2S]-[ferredoxin] + S-adenosyl-L-homocysteine. In terms of biological role, specifically methylates position 2 of adenine 2503 in 23S rRNA and position 2 of adenine 37 in tRNAs. m2A2503 modification seems to play a crucial role in the proofreading step occurring at the peptidyl transferase center and thus would serve to optimize ribosomal fidelity. This chain is Dual-specificity RNA methyltransferase RlmN, found in Neisseria meningitidis serogroup A / serotype 4A (strain DSM 15465 / Z2491).